A 95-amino-acid polypeptide reads, in one-letter code: Aspartyl/glutamyl-tRNA(Asn/Gln) amidotransferase subunit C (95 aa).

The protein belongs to the GatC family. Heterotrimer of A, B and C subunits.

The catalysed reaction is L-glutamyl-tRNA(Gln) + L-glutamine + ATP + H2O = L-glutaminyl-tRNA(Gln) + L-glutamate + ADP + phosphate + H(+). The enzyme catalyses L-aspartyl-tRNA(Asn) + L-glutamine + ATP + H2O = L-asparaginyl-tRNA(Asn) + L-glutamate + ADP + phosphate + 2 H(+). Functionally, allows the formation of correctly charged Asn-tRNA(Asn) or Gln-tRNA(Gln) through the transamidation of misacylated Asp-tRNA(Asn) or Glu-tRNA(Gln) in organisms which lack either or both of asparaginyl-tRNA or glutaminyl-tRNA synthetases. The reaction takes place in the presence of glutamine and ATP through an activated phospho-Asp-tRNA(Asn) or phospho-Glu-tRNA(Gln). This Methylobacterium radiotolerans (strain ATCC 27329 / DSM 1819 / JCM 2831 / NBRC 15690 / NCIMB 10815 / 0-1) protein is Aspartyl/glutamyl-tRNA(Asn/Gln) amidotransferase subunit C.